The primary structure comprises 153 residues: Arginine repressor (153 aa).

This sequence belongs to the ArgR family.

It is found in the cytoplasm. Its pathway is amino-acid biosynthesis; L-arginine biosynthesis [regulation]. Functionally, regulates arginine biosynthesis genes. The protein is Arginine repressor of Acetivibrio thermocellus (strain ATCC 27405 / DSM 1237 / JCM 9322 / NBRC 103400 / NCIMB 10682 / NRRL B-4536 / VPI 7372) (Clostridium thermocellum).